We begin with the raw amino-acid sequence, 178 residues long: Cell division protein ZapC (178 aa).

This sequence belongs to the ZapC family. In terms of assembly, interacts directly with FtsZ.

It localises to the cytoplasm. Contributes to the efficiency of the cell division process by stabilizing the polymeric form of the cell division protein FtsZ. Acts by promoting interactions between FtsZ protofilaments and suppressing the GTPase activity of FtsZ. The protein is Cell division protein ZapC of Pseudoalteromonas atlantica (strain T6c / ATCC BAA-1087).